A 314-amino-acid chain; its full sequence is tRNA dimethylallyltransferase (314 aa).

12–19 (GPTASGKT) contributes to the ATP binding site. 14-19 (TASGKT) contributes to the substrate binding site. 2 interaction with substrate tRNA regions span residues 37-40 (DSAQ) and 161-165 (QRIQR).

It belongs to the IPP transferase family. As to quaternary structure, monomer. Mg(2+) is required as a cofactor.

The catalysed reaction is adenosine(37) in tRNA + dimethylallyl diphosphate = N(6)-dimethylallyladenosine(37) in tRNA + diphosphate. In terms of biological role, catalyzes the transfer of a dimethylallyl group onto the adenine at position 37 in tRNAs that read codons beginning with uridine, leading to the formation of N6-(dimethylallyl)adenosine (i(6)A). This is tRNA dimethylallyltransferase from Nitrosococcus oceani (strain ATCC 19707 / BCRC 17464 / JCM 30415 / NCIMB 11848 / C-107).